The primary structure comprises 176 residues: MDSQVRQNYHRDCEAAVNRMINMELFASYSYTSMAFYFSRDDVALPGFAHFFKENSDEEREHADKLLTFQNSRGGRIFLQDIKKPERDEWGSGLDALQSSLQLEKNVNQALLDLHKIASDHTDPHMCDFLETHYLNEQVESIKKLGDFITNLSRMDAVKNKMAEYLFDKHTMGGKN.

Residues 7–156 (QNYHRDCEAA…DFITNLSRMD (150 aa)) enclose the Ferritin-like diiron domain. Residues E24, E59, H62, E104, and Q138 each coordinate Fe cation.

This sequence belongs to the ferritin family. In liver, forms a heteromer consisting of middle and heavy subunits. The functional molecule forms a roughly spherical shell with a diameter of 12 nm and contains a central cavity into which the insoluble mineral iron core is deposited. In terms of tissue distribution, liver (at protein level).

It catalyses the reaction 4 Fe(2+) + O2 + 4 H(+) = 4 Fe(3+) + 2 H2O. Its function is as follows. Stores iron in a soluble, non-toxic, readily available form. Important for iron homeostasis. Has ferroxidase activity. Iron is taken up in the ferrous form and deposited as ferric hydroxides after oxidation. This Trematomus bernacchii (Emerald rockcod) protein is Ferritin, liver middle subunit.